Here is a 141-residue protein sequence, read N- to C-terminus: Large ribosomal subunit protein uL11 (141 aa).

This sequence belongs to the universal ribosomal protein uL11 family. In terms of assembly, part of the ribosomal stalk of the 50S ribosomal subunit. Interacts with L10 and the large rRNA to form the base of the stalk. L10 forms an elongated spine to which L12 dimers bind in a sequential fashion forming a multimeric L10(L12)X complex. Post-translationally, one or more lysine residues are methylated.

Its function is as follows. Forms part of the ribosomal stalk which helps the ribosome interact with GTP-bound translation factors. The sequence is that of Large ribosomal subunit protein uL11 from Thermomicrobium roseum (strain ATCC 27502 / DSM 5159 / P-2).